A 158-amino-acid chain; its full sequence is SsrA-binding protein (158 aa).

Belongs to the SmpB family.

The protein resides in the cytoplasm. Functionally, required for rescue of stalled ribosomes mediated by trans-translation. Binds to transfer-messenger RNA (tmRNA), required for stable association of tmRNA with ribosomes. tmRNA and SmpB together mimic tRNA shape, replacing the anticodon stem-loop with SmpB. tmRNA is encoded by the ssrA gene; the 2 termini fold to resemble tRNA(Ala) and it encodes a 'tag peptide', a short internal open reading frame. During trans-translation Ala-aminoacylated tmRNA acts like a tRNA, entering the A-site of stalled ribosomes, displacing the stalled mRNA. The ribosome then switches to translate the ORF on the tmRNA; the nascent peptide is terminated with the 'tag peptide' encoded by the tmRNA and targeted for degradation. The ribosome is freed to recommence translation, which seems to be the essential function of trans-translation. The chain is SsrA-binding protein from Roseiflexus sp. (strain RS-1).